A 252-amino-acid chain; its full sequence is Hydroxyacylglutathione hydrolase (252 aa).

Zn(2+) contacts are provided by histidine 54, histidine 56, aspartate 58, histidine 59, histidine 113, aspartate 132, and histidine 170.

The protein belongs to the metallo-beta-lactamase superfamily. Glyoxalase II family. As to quaternary structure, monomer. It depends on Zn(2+) as a cofactor.

The enzyme catalyses an S-(2-hydroxyacyl)glutathione + H2O = a 2-hydroxy carboxylate + glutathione + H(+). It participates in secondary metabolite metabolism; methylglyoxal degradation; (R)-lactate from methylglyoxal: step 2/2. Its function is as follows. Thiolesterase that catalyzes the hydrolysis of S-D-lactoyl-glutathione to form glutathione and D-lactic acid. This chain is Hydroxyacylglutathione hydrolase, found in Synechococcus sp. (strain JA-3-3Ab) (Cyanobacteria bacterium Yellowstone A-Prime).